Here is a 194-residue protein sequence, read N- to C-terminus: A-type ATP synthase subunit E (194 aa).

Belongs to the V-ATPase E subunit family. As to quaternary structure, has multiple subunits with at least A(3), B(3), C, D, E, F, H, I and proteolipid K(x).

Its subcellular location is the cell membrane. Component of the A-type ATP synthase that produces ATP from ADP in the presence of a proton gradient across the membrane. The protein is A-type ATP synthase subunit E of Haloferax volcanii (strain ATCC 29605 / DSM 3757 / JCM 8879 / NBRC 14742 / NCIMB 2012 / VKM B-1768 / DS2) (Halobacterium volcanii).